The primary structure comprises 194 residues: Leucyl/phenylalanyl-tRNA--protein transferase (194 aa).

Belongs to the L/F-transferase family.

The protein localises to the cytoplasm. It catalyses the reaction N-terminal L-lysyl-[protein] + L-leucyl-tRNA(Leu) = N-terminal L-leucyl-L-lysyl-[protein] + tRNA(Leu) + H(+). It carries out the reaction N-terminal L-arginyl-[protein] + L-leucyl-tRNA(Leu) = N-terminal L-leucyl-L-arginyl-[protein] + tRNA(Leu) + H(+). The catalysed reaction is L-phenylalanyl-tRNA(Phe) + an N-terminal L-alpha-aminoacyl-[protein] = an N-terminal L-phenylalanyl-L-alpha-aminoacyl-[protein] + tRNA(Phe). Functions in the N-end rule pathway of protein degradation where it conjugates Leu, Phe and, less efficiently, Met from aminoacyl-tRNAs to the N-termini of proteins containing an N-terminal arginine or lysine. The sequence is that of Leucyl/phenylalanyl-tRNA--protein transferase from Chlorobium phaeobacteroides (strain DSM 266 / SMG 266 / 2430).